A 396-amino-acid chain; its full sequence is Alanine racemase (396 aa).

The active-site Proton acceptor; specific for D-alanine is lysine 46. The residue at position 46 (lysine 46) is an N6-(pyridoxal phosphate)lysine. Arginine 145 lines the substrate pocket. Catalysis depends on tyrosine 280, which acts as the Proton acceptor; specific for L-alanine. Residue methionine 328 coordinates substrate.

The protein belongs to the alanine racemase family. The cofactor is pyridoxal 5'-phosphate.

It catalyses the reaction L-alanine = D-alanine. Its pathway is amino-acid biosynthesis; D-alanine biosynthesis; D-alanine from L-alanine: step 1/1. Catalyzes the interconversion of L-alanine and D-alanine. May also act on other amino acids. The sequence is that of Alanine racemase (alr) from Brucella canis (strain ATCC 23365 / NCTC 10854 / RM-666).